A 321-amino-acid chain; its full sequence is Probable UDP-sugar transporter protein SLC35A4 (321 aa).

Topologically, residues 1-22 (MYSVNIEPDGSNHSPSRKRLKQ) are cytoplasmic. The chain crosses the membrane as a helical span at residues 23–43 (ILWGLMLVLSVTIYGSHAPLI). The Lumenal portion of the chain corresponds to 44-56 (YLCKVNGEIPFSS). A helical transmembrane segment spans residues 57–77 (SAVVLLIELSKFVISLVFFLI). The Cytoplasmic portion of the chain corresponds to 78-91 (QDWKSLKASVSWHL). A helical transmembrane segment spans residues 92-112 (AAPYAVPAVLYGANNNLVVYI). Over 113–119 (QHFMDPS) the chain is Lumenal. A helical membrane pass occupies residues 120–140 (SFQVLSNLKIVSTAVLYSLFL). Residues 141–149 (RQRLSVRRW) are Cytoplasmic-facing. A helical membrane pass occupies residues 150-170 (LSVFLLLAAGVFYSYGGIQDL). Over 171–180 (EKVSSDTNLY) the chain is Lumenal. Residues 181 to 201 (VTLPGLLLMLAYCLISGLSAV) traverse the membrane as a helical segment. The Cytoplasmic portion of the chain corresponds to 202-211 (YTEMTLKTQK). A helical transmembrane segment spans residues 212–232 (IPLNMQNLYLYSFGIIINLTA). Residues 233–247 (HLTSSKNSDFFDGFS) lie on the Lumenal side of the membrane. Residues 248 to 268 (VWVWVIILSQALNGLIMSLVM) form a helical membrane-spanning segment. Residues 269–321 (KLSNNITRLFIISFSMLANGFLSFILFQLQLTALFFLAVVLIGLAVYMYYGMK) are Cytoplasmic-facing.

This sequence belongs to the nucleotide-sugar transporter family. SLC35A subfamily.

Its subcellular location is the golgi apparatus membrane. The catalysed reaction is CDP-L-ribitol(in) + CDP(out) = CDP-L-ribitol(out) + CDP(in). Functionally, mediates the transport of CDP-ribitol. Does not exhibit CMP-sialic acid, UDP-galactose and UDP-N-acetylglucosamine transport activity. This chain is Probable UDP-sugar transporter protein SLC35A4, found in Xenopus tropicalis (Western clawed frog).